A 296-amino-acid chain; its full sequence is ATP synthase gamma chain (296 aa).

This sequence belongs to the ATPase gamma chain family. In terms of assembly, F-type ATPases have 2 components, CF(1) - the catalytic core - and CF(0) - the membrane proton channel. CF(1) has five subunits: alpha(3), beta(3), gamma(1), delta(1), epsilon(1). CF(0) has three main subunits: a, b and c.

It localises to the cell inner membrane. Produces ATP from ADP in the presence of a proton gradient across the membrane. The gamma chain is believed to be important in regulating ATPase activity and the flow of protons through the CF(0) complex. This Methylorubrum extorquens (strain CM4 / NCIMB 13688) (Methylobacterium extorquens) protein is ATP synthase gamma chain.